We begin with the raw amino-acid sequence, 93 residues long: Small ribosomal subunit protein uS19 (93 aa).

Belongs to the universal ribosomal protein uS19 family.

Protein S19 forms a complex with S13 that binds strongly to the 16S ribosomal RNA. This Acidothermus cellulolyticus (strain ATCC 43068 / DSM 8971 / 11B) protein is Small ribosomal subunit protein uS19.